The sequence spans 382 residues: Na(+)/H(+) antiporter NhaA 2 (382 aa).

The next 11 helical transmembrane spans lie at 7 to 27, 58 to 78, 94 to 114, 124 to 144, 153 to 173, 178 to 198, 199 to 219, 255 to 275, 291 to 311, 327 to 347, and 361 to 381; these read MALS…LALL, LDLW…GLEL, SLPI…FAAI, GWAI…MLLG, LFLL…IALF, LSAL…LLNY, YHIT…IAML, NPWV…GIDI, IILG…FIAI, FYGI…IDGL, and LAIL…LKIV.

The protein belongs to the NhaA Na(+)/H(+) (TC 2.A.33) antiporter family.

The protein resides in the cell inner membrane. It catalyses the reaction Na(+)(in) + 2 H(+)(out) = Na(+)(out) + 2 H(+)(in). In terms of biological role, na(+)/H(+) antiporter that extrudes sodium in exchange for external protons. This Campylobacter jejuni subsp. doylei (strain ATCC BAA-1458 / RM4099 / 269.97) protein is Na(+)/H(+) antiporter NhaA 2.